The chain runs to 337 residues: Ycf66-like protein (337 aa).

The disordered stretch occupies residues T111 to Y337. Over residues A113–E123 the composition is skewed to acidic residues. Basic and acidic residues-rich tracts occupy residues R133–R143 and F253–E269. The span at Q304–S316 shows a compositional bias: polar residues.

It belongs to the ycf66 family.

This is Ycf66-like protein from Synechocystis sp. (strain ATCC 27184 / PCC 6803 / Kazusa).